Reading from the N-terminus, the 200-residue chain is Large ribosomal subunit protein uL4 (200 aa).

The segment at 42–65 (TRAHKSRADVSGGGKKPFRQKGTG) is disordered.

This sequence belongs to the universal ribosomal protein uL4 family. In terms of assembly, part of the 50S ribosomal subunit.

Functionally, one of the primary rRNA binding proteins, this protein initially binds near the 5'-end of the 23S rRNA. It is important during the early stages of 50S assembly. It makes multiple contacts with different domains of the 23S rRNA in the assembled 50S subunit and ribosome. In terms of biological role, forms part of the polypeptide exit tunnel. The sequence is that of Large ribosomal subunit protein uL4 from Acinetobacter baumannii (strain AB307-0294).